The following is a 364-amino-acid chain: Fructose-bisphosphate aldolase C (364 aa).

Tyrosine 5 is subject to Phosphotyrosine. Phosphoserine is present on residues serine 36, serine 39, and serine 45. Position 56 (arginine 56) interacts with substrate. Lysine 111 carries the post-translational modification N6-acetyllysine. Serine 132 is modified (phosphoserine). Position 147 (lysine 147) interacts with substrate. Residue glutamate 188 is the Proton acceptor of the active site. The active-site Schiff-base intermediate with dihydroxyacetone-P is lysine 230.

It belongs to the class I fructose-bisphosphate aldolase family. In terms of assembly, homotetramer. Interacts with ATP6V1E1. May interact with PLD2.

The enzyme catalyses beta-D-fructose 1,6-bisphosphate = D-glyceraldehyde 3-phosphate + dihydroxyacetone phosphate. Its pathway is carbohydrate degradation; glycolysis; D-glyceraldehyde 3-phosphate and glycerone phosphate from D-glucose: step 4/4. This is Fructose-bisphosphate aldolase C (ALDOC) from Homo sapiens (Human).